We begin with the raw amino-acid sequence, 556 residues long: Arginine--tRNA ligase (556 aa).

Residues 132–142 (ANPTGNLHLGH) carry the 'HIGH' region motif.

This sequence belongs to the class-I aminoacyl-tRNA synthetase family. In terms of assembly, monomer.

It is found in the cytoplasm. The enzyme catalyses tRNA(Arg) + L-arginine + ATP = L-arginyl-tRNA(Arg) + AMP + diphosphate. This is Arginine--tRNA ligase from Bacillus licheniformis (strain ATCC 14580 / DSM 13 / JCM 2505 / CCUG 7422 / NBRC 12200 / NCIMB 9375 / NCTC 10341 / NRRL NRS-1264 / Gibson 46).